Here is a 69-residue protein sequence, read N- to C-terminus: Conotoxin Lt5.7 (69 aa).

The signal sequence occupies residues 1 to 19 (MLCLPVFIILLLLASPAAP). Residues 20–54 (KSLETRIQNDLIRAGLTDADLKTEKGFLSGLLNVA) constitute a propeptide that is removed on maturation.

The protein belongs to the conotoxin T superfamily. Post-translationally, contains 2 disulfide bonds that can be either 'C1-C3, C2-C4' or 'C1-C4, C2-C3', since these disulfide connectivities have been observed for conotoxins with cysteine framework V (for examples, see AC P0DQQ7 and AC P81755). As to expression, expressed by the venom duct.

The protein resides in the secreted. The sequence is that of Conotoxin Lt5.7 from Conus litteratus (Lettered cone).